We begin with the raw amino-acid sequence, 366 residues long: MADNSSDYRALFLNDVPMMDARAPVEFSKGAFPGVINLPLMNDIERQKVGTCYKQHGQDAAIQLGHQLVCGQVKDERVEAWVEFARANPNGYLYCFRGGLRSQTVQRWLKDAGVDYPRILGGYKAMRTFLLDTLHEAVTECDLVVLGGMTGTGKTEVLTQLPNGLDLEGVANHRGSSFGKRATGQPAQIDFENRLAINLLKKRAAGIEQFVVEDESRLVGSCNVPLELHQAMQGCPVVWLEDSFEHRVERILADYVVNLCAEFISVKGEELGFGLFADRLLQSLNNIHKRLGGERHQRLLALMQTALEEQQRSGAVELHRGWIEGLLGEYYDPMYAYQREHKAARIEFAGNQFEVSGYLSERSSRR.

The region spanning F12 to H135 is the Rhodanese domain. The active-site S-selanylcysteine intermediate is C95.

This sequence belongs to the SelU family. Monomer.

It catalyses the reaction 5-methylaminomethyl-2-thiouridine(34) in tRNA + selenophosphate + (2E)-geranyl diphosphate + H2O + H(+) = 5-methylaminomethyl-2-selenouridine(34) in tRNA + (2E)-thiogeraniol + phosphate + diphosphate. The enzyme catalyses 5-methylaminomethyl-2-thiouridine(34) in tRNA + (2E)-geranyl diphosphate = 5-methylaminomethyl-S-(2E)-geranyl-thiouridine(34) in tRNA + diphosphate. It carries out the reaction 5-methylaminomethyl-S-(2E)-geranyl-thiouridine(34) in tRNA + selenophosphate + H(+) = 5-methylaminomethyl-2-(Se-phospho)selenouridine(34) in tRNA + (2E)-thiogeraniol. The catalysed reaction is 5-methylaminomethyl-2-(Se-phospho)selenouridine(34) in tRNA + H2O = 5-methylaminomethyl-2-selenouridine(34) in tRNA + phosphate. Involved in the post-transcriptional modification of the uridine at the wobble position (U34) of tRNA(Lys), tRNA(Glu) and tRNA(Gln). Catalyzes the conversion of 2-thiouridine (S2U-RNA) to 2-selenouridine (Se2U-RNA). Acts in a two-step process involving geranylation of 2-thiouridine (S2U) to S-geranyl-2-thiouridine (geS2U) and subsequent selenation of the latter derivative to 2-selenouridine (Se2U) in the tRNA chain. In Pseudomonas syringae pv. tomato (strain ATCC BAA-871 / DC3000), this protein is tRNA 2-selenouridine synthase.